Reading from the N-terminus, the 348-residue chain is Protein disulfide isomerase CRELD2 (348 aa).

Residues 1-22 (MHLPPAAAVGLLLLLLPPPARV) form the signal peptide. The CXXC motif lies at 30 to 33 (CQRC). 4 disulfides stabilise this stretch: cysteine 30-cysteine 33, cysteine 139-cysteine 153, cysteine 147-cysteine 165, and cysteine 167-cysteine 176. Residues 135–177 (DCQECQGGSQRPCSGNGHCDGDGSRQGDGSCQCHVGYKGPLCI) enclose the EGF-like 1 domain. The stretch at 192–239 (HSFCTACDESCKTCSGPTNKGCVECEVGWTRVEDACVDVDECAAETPP) is one FU 1 repeat. Residue asparagine 250 is glycosylated (N-linked (GlcNAc...) asparagine). The FU 2 repeat unit spans residues 252-299 (SYTCEECDSTCVGCTGKGPANCKECISGYSKQKGECADIDECSLETKV). The CXXC signature appears at 262–265 (CVGC). Intrachain disulfides connect cysteine 262-cysteine 265, cysteine 293-cysteine 307, cysteine 300-cysteine 316, and cysteine 318-cysteine 328. The EGF-like 2; calcium-binding domain maps to 289–329 (DIDECSLETKVCKKENENCYNTPGSFVCVCPEGFEEDRRCL).

It belongs to the CRELD family. In terms of assembly, interacts with CHRNA4. Component of a complex containing at least CRELD2, MANF, MATN3 and PDIA4.

Its subcellular location is the endoplasmic reticulum. It carries out the reaction Catalyzes the rearrangement of -S-S- bonds in proteins.. Its function is as follows. Protein disulfide isomerase. Might play a role in the unfolded protein response. May regulate transport of alpha4-beta2 neuronal acetylcholine receptor. The chain is Protein disulfide isomerase CRELD2 (CRELD2) from Cricetulus griseus (Chinese hamster).